Here is a 291-residue protein sequence, read N- to C-terminus: Ribonuclease Z (291 aa).

The Zn(2+) site is built by His61, His63, Asp65, His66, His133, Asp201, and His257. The active-site Proton acceptor is the Asp65.

The protein belongs to the RNase Z family. Homodimer. The cofactor is Zn(2+).

The catalysed reaction is Endonucleolytic cleavage of RNA, removing extra 3' nucleotides from tRNA precursor, generating 3' termini of tRNAs. A 3'-hydroxy group is left at the tRNA terminus and a 5'-phosphoryl group is left at the trailer molecule.. In terms of biological role, zinc phosphodiesterase, which displays some tRNA 3'-processing endonuclease activity. Probably involved in tRNA maturation, by removing a 3'-trailer from precursor tRNA. This Saccharolobus islandicus (strain Y.N.15.51 / Yellowstone #2) (Sulfolobus islandicus) protein is Ribonuclease Z.